A 250-amino-acid chain; its full sequence is Eukaryotic translation initiation factor 3 subunit K (250 aa).

The region spanning 54 to 235 (YDLFGNLAIL…DVKAGVVKEN (182 aa)) is the PCI domain.

The protein belongs to the eIF-3 subunit K family. In terms of assembly, component of the eukaryotic translation initiation factor 3 (eIF-3) complex.

The protein resides in the cytoplasm. Component of the eukaryotic translation initiation factor 3 (eIF-3) complex, which is involved in protein synthesis of a specialized repertoire of mRNAs and, together with other initiation factors, stimulates binding of mRNA and methionyl-tRNAi to the 40S ribosome. The eIF-3 complex specifically targets and initiates translation of a subset of mRNAs involved in cell proliferation. In Cryptococcus neoformans var. neoformans serotype D (strain B-3501A) (Filobasidiella neoformans), this protein is Eukaryotic translation initiation factor 3 subunit K.